The sequence spans 98 residues: NADH-ubiquinone oxidoreductase chain 4L (98 aa).

3 helical membrane-spanning segments follow: residues Met1–Met21, Ser29–Leu49, and Ile61–Val81.

This sequence belongs to the complex I subunit 4L family. Core subunit of respiratory chain NADH dehydrogenase (Complex I) which is composed of 45 different subunits.

The protein resides in the mitochondrion inner membrane. The enzyme catalyses a ubiquinone + NADH + 5 H(+)(in) = a ubiquinol + NAD(+) + 4 H(+)(out). Its function is as follows. Core subunit of the mitochondrial membrane respiratory chain NADH dehydrogenase (Complex I) which catalyzes electron transfer from NADH through the respiratory chain, using ubiquinone as an electron acceptor. Part of the enzyme membrane arm which is embedded in the lipid bilayer and involved in proton translocation. This chain is NADH-ubiquinone oxidoreductase chain 4L (MT-ND4L), found in Eumetopias jubatus (Steller sea lion).